Consider the following 235-residue polypeptide: Ubiquinone biosynthesis O-methyltransferase (235 aa).

S-adenosyl-L-methionine is bound by residues arginine 39, glycine 59, aspartate 80, and methionine 124.

Belongs to the methyltransferase superfamily. UbiG/COQ3 family.

It carries out the reaction a 3-demethylubiquinol + S-adenosyl-L-methionine = a ubiquinol + S-adenosyl-L-homocysteine + H(+). The catalysed reaction is a 3-(all-trans-polyprenyl)benzene-1,2-diol + S-adenosyl-L-methionine = a 2-methoxy-6-(all-trans-polyprenyl)phenol + S-adenosyl-L-homocysteine + H(+). It participates in cofactor biosynthesis; ubiquinone biosynthesis. Its function is as follows. O-methyltransferase that catalyzes the 2 O-methylation steps in the ubiquinone biosynthetic pathway. The sequence is that of Ubiquinone biosynthesis O-methyltransferase from Photobacterium profundum (strain SS9).